The following is a 122-amino-acid chain: Biogenesis of lysosome-related organelles complex 1 subunit BLS1 (122 aa).

Residue S33 is modified to Phosphoserine.

It belongs to the BLOC1S1 family. As to quaternary structure, component of the biogenesis of lysosome-related organelles complex-1 (BLOC-1) composed of at least BLI1, BLS1, CNL1, KXD1, SNN1 and VAB2.

The protein localises to the endosome. Functionally, component of the biogenesis of lysosome-related organelles complex-1 (BLOC-1), a complex involved in endosomal cargo sorting. The chain is Biogenesis of lysosome-related organelles complex 1 subunit BLS1 (BLS1) from Saccharomyces cerevisiae (strain YJM789) (Baker's yeast).